Consider the following 284-residue polypeptide: GTP cyclohydrolase MptA (284 aa).

Belongs to the GTP cyclohydrolase IV family. Homodimer. The cofactor is Fe(2+).

It catalyses the reaction GTP + H2O = 7,8-dihydroneopterin 2',3'-cyclic phosphate + formate + diphosphate + H(+). The protein operates within cofactor biosynthesis; 5,6,7,8-tetrahydromethanopterin biosynthesis. Functionally, converts GTP to 7,8-dihydro-D-neopterin 2',3'-cyclic phosphate, the first intermediate in the biosynthesis of coenzyme methanopterin. This chain is GTP cyclohydrolase MptA, found in Thermoplasma volcanium (strain ATCC 51530 / DSM 4299 / JCM 9571 / NBRC 15438 / GSS1).